Consider the following 32-residue polypeptide: Cytochrome b6-f complex subunit 7 (32 aa).

Residues 9–27 (AVLSSVLVLVGLAIGFLLL) form a helical membrane-spanning segment.

Belongs to the PetM family. As to quaternary structure, the 4 large subunits of the cytochrome b6-f complex are cytochrome b6, subunit IV (17 kDa polypeptide, PetD), cytochrome f and the Rieske protein, while the 4 small subunits are PetG, PetL, PetM and PetN. The complex functions as a dimer.

It localises to the plastid. Its subcellular location is the chloroplast thylakoid membrane. Component of the cytochrome b6-f complex, which mediates electron transfer between photosystem II (PSII) and photosystem I (PSI), cyclic electron flow around PSI, and state transitions. The chain is Cytochrome b6-f complex subunit 7 from Pyropia yezoensis (Susabi-nori).